The following is a 610-amino-acid chain: Menin (610 aa).

The tract at residues 214–390 (GVAERSWLYL…SLLEAGEERP (177 aa)) is interaction with FANCD2. The segment at 460–552 (REAEAAEAEE…SPPPEGPVLT (93 aa)) is disordered. Basic and acidic residues predominate over residues 484–500 (RRESKPEEPPPPKKPAL). S487 and S543 each carry phosphoserine. A Phosphothreonine modification is found at T594.

As to quaternary structure, component of the MLL-HCF complex, at least composed of KMT2A/MLL1, MEN1, ASH2L, RBBP5, DPY30, WDR5, HCFC1 and HCFC2. Component of the menin-associated histone methyltransferase complex, at least composed of KMT2B/MLL4, MEN1, ASH2L, RBBP5, DPY30 and WDR5. Interacts with POLR2B. Interacts with POLR2A phosphorylated at 'Ser-5', but not with the unphosphorylated, nor 'Ser-2' phosphorylated POLR2A forms. Interacts with FANCD2 and DBF4. Interacts with JUND (via MBM motif); inhibits the interaction of JUND with MAPK10 and the phosphorylation of JUND by MAP kinases MAPK8 and MAPK10. Interacts with SMAD3, but not with SMAD2, nor SMAD4. Directly interacts with NFKB1, NFKB2 and RELA. Interacts with KMT2A (via MBM motif). The KMT2A-MEN1 complex interacts with PSIP1 with a greater affinity as MEN1 enhances interaction of KMT2A with PSIP1. Interacts with the fusion protein KMT2A-MLLT3. In terms of tissue distribution, ubiquitous.

Its subcellular location is the nucleus. Its function is as follows. Essential component of a MLL/SET1 histone methyltransferase (HMT) complex, a complex that specifically methylates 'Lys-4' of histone H3 (H3K4). Functions as a transcriptional regulator. Binds to the TERT promoter and represses telomerase expression. Plays a role in TGFB1-mediated inhibition of cell-proliferation, possibly regulating SMAD3 transcriptional activity. Represses JUND-mediated transcriptional activation on AP1 sites, as well as that mediated by NFKB subunit RELA. Positively regulates HOXC8 and HOXC6 gene expression. May be involved in normal hematopoiesis through the activation of HOXA9 expression. May be involved in DNA repair. This chain is Menin (MEN1), found in Homo sapiens (Human).